Here is a 117-residue protein sequence, read N- to C-terminus: Circadian clock oscillator protein KaiB (117 aa).

Belongs to the KaiB family. As to quaternary structure, may undergo a major conformational rearrangment; in the free state forms homooligomers. When bound to KaiC switches to a monomeric thioredoxin-fold (KaiB(fs)). The active oscillator complex is probably KaiC(6):KaiB(6).

In terms of biological role, component of the KaiBC clock protein complex, which constitutes the main circadian regulator in cyanobacteria; it may modify the ATPase activity of KaiC. Functionally, may be a metamorphic protein which reversibly switches between an inactive tetrameric fold and a rare, thioredoxin-like monomeric fold (KaiB(fs)). KaiB(fs) binds phospho-KaiC, and perhaps clock output effectors. This is Circadian clock oscillator protein KaiB from Prochlorococcus marinus (strain SARG / CCMP1375 / SS120).